A 145-amino-acid chain; its full sequence is Putative phosphatidylglycerol/phosphatidylinositol transfer protein DDB_G0282179 (145 aa).

Positions 1 to 20 (MIKTILLLLINFMLILIVNG) are cleaved as a signal peptide. Asn134 carries N-linked (GlcNAc...) asparagine glycosylation.

This sequence belongs to the NPC2 family. As to quaternary structure, monomer.

Functionally, catalyzes the intermembrane transfer of phosphatidylglycerol and phosphatidylinositol. This Dictyostelium discoideum (Social amoeba) protein is Putative phosphatidylglycerol/phosphatidylinositol transfer protein DDB_G0282179.